Consider the following 342-residue polypeptide: MRSLIEVQRKLLPELLSVMQKRYQILQYIRLMQPIGRRNLAVSLGLTERVLRSEVTFLKEQDLIDIYPSGMTLTNEGELLLAELEEVMKEVSGLRLLETTLKEAFSLSEVVVVSGDSDQSPWVKNEMGRASVSCIKERLVGKKNTVAVTGGTTLAAVAEMMTPDLKHPDVLFVPARGGLGENVQNQANTICAKMAEKSMSHYRLLHVPDQLSDEAYRSIIGEPSIKDMLHLIKSAGMVVHGIGDAMTMAERRKTPQADLEKVKNGHAVGEAFGYYFNHQGEVVHKVKTVGIQLDDLKNNKCVIAVAGGSSKAKAIKAFMQQAHDSILITDEGAAKELVRDFN.

Positions 37–56 (RRNLAVSLGLTERVLRSEVT) form a DNA-binding region, H-T-H motif.

The protein belongs to the SorC transcriptional regulatory family. As to quaternary structure, homotetramer.

In terms of biological role, in the absence of glucose, represses the transcription of the gapA operon, which encodes five key glycolytic enzymes. The sequence is that of Central glycolytic genes regulator (cggR) from Priestia megaterium (strain DSM 319 / IMG 1521) (Bacillus megaterium).